The chain runs to 354 residues: MQLTPRSVHLVHLLLAATTLISPSWSNHQSQQPALQALSPDDTLFAHLRCFELFASGQQSRDRDADAADWLGGNRERYLHRVERTPAFVKCVLGRMHFYDSSERRFNVNILRTQYNAYKQWMTLSEEDVDDFIHEVSNIGALNSSNDAEVYDALKLLFTNHSVSFFQLFLRDPTVLQNMYDDKSLSVRKPNQTVVQFCELQMAAELWDDICLIRAYQISNHTEAMERHIACIFRGFQYLDANSSIDVKEIVRDYELTETLDEASKNSIEECARNASEKDDIPKRSLAMYSCLLDGSHSEVFKKAFDFREVRSGNLTFLVQNLPYDRDQVRQQILALDKEHCNDQQPLAGRFIED.

Residues 1 to 26 (MQLTPRSVHLVHLLLAATTLISPSWS) form the signal peptide.

Belongs to the PBP/GOBP family.

Its subcellular location is the secreted. Its function is as follows. Modulates blood feeding of female mosquitoes on vertebrate species by binding and sequestering different mediators involved in the host response. Binds serotonin with high affinity. Binds weakly noradrenaline and histamine. Does not bind tryptamine, octopamine, dopamine, adrenaline, leukotriene C4, leukotriene D4, leukotriene B4, ADP and U-46619, a stable analog of thromboxane A2. Inhibits agonist-induced platelet aggregation. Exhibits vasodilating activity. In Anopheles gambiae (African malaria mosquito), this protein is Long form salivary protein D7L3.